We begin with the raw amino-acid sequence, 1461 residues long: Potassium channel K2 (1461 aa).

Helical transmembrane passes span 44–64 (IIEG…LIYI), 142–162 (FNYY…YISL), 183–203 (IYNM…MVII), 218–238 (LIDI…IFVF), 242–262 (IDIY…NVSY), and 281–301 (IVLG…TIQA). The pore-forming intramembrane region spans 322–340 (YFYFSIISISTVGYGDIFP). The helical transmembrane segment at 349-369 (CIIFIFWTFIWVPIQFNDLII) threads the bilayer. Residues 771-794 (KRDDFDNNNNNNNNNIVKSRKKGR) form a disordered region.

As to quaternary structure, may form oligomers or interact with other proteins.

The protein localises to the membrane. Contributes to transmembrane potassium transport. This Plasmodium falciparum (isolate 3D7) protein is Potassium channel K2.